A 339-amino-acid polypeptide reads, in one-letter code: Transcription initiation factor IIB (339 aa).

Residues 39–70 (EELICPVCGSKNIIKDYERAEIVCEMCGCVLQ) form a TFIIB-type zinc finger. Positions 43, 46, 62, and 65 each coordinate Zn(2+). A run of 2 repeats spans residues 156–239 (SELD…SREL) and 250–331 (DYVP…ELTE).

This sequence belongs to the TFIIB family.

Its function is as follows. Stabilizes TBP binding to an archaeal box-A promoter. Also responsible for recruiting RNA polymerase II to the pre-initiation complex (DNA-TBP-TFIIB). The polypeptide is Transcription initiation factor IIB (Methanococcus maripaludis (strain C6 / ATCC BAA-1332)).